The primary structure comprises 76 residues: Small ribosomal subunit protein bS16c (76 aa).

This sequence belongs to the bacterial ribosomal protein bS16 family.

The protein localises to the plastid. It localises to the chloroplast. The polypeptide is Small ribosomal subunit protein bS16c (Guillardia theta (Cryptophyte)).